A 121-amino-acid chain; its full sequence is Small ribosomal subunit protein uS13 (121 aa).

Positions Arg-92–Lys-121 are disordered.

This sequence belongs to the universal ribosomal protein uS13 family. In terms of assembly, part of the 30S ribosomal subunit. Forms a loose heterodimer with protein S19. Forms two bridges to the 50S subunit in the 70S ribosome.

Its function is as follows. Located at the top of the head of the 30S subunit, it contacts several helices of the 16S rRNA. In the 70S ribosome it contacts the 23S rRNA (bridge B1a) and protein L5 of the 50S subunit (bridge B1b), connecting the 2 subunits; these bridges are implicated in subunit movement. Contacts the tRNAs in the A and P-sites. The chain is Small ribosomal subunit protein uS13 from Burkholderia cenocepacia (strain ATCC BAA-245 / DSM 16553 / LMG 16656 / NCTC 13227 / J2315 / CF5610) (Burkholderia cepacia (strain J2315)).